Here is a 78-residue protein sequence, read N- to C-terminus: D-alanyl carrier protein (78 aa).

Residues 1 to 78 (MDFKQEVLDV…NIVNQLSELK (78 aa)) form the Carrier domain. Ser-36 bears the O-(pantetheine 4'-phosphoryl)serine mark.

This sequence belongs to the DltC family. Post-translationally, 4'-phosphopantetheine is transferred from CoA to a specific serine of apo-DCP.

The protein localises to the cytoplasm. Its pathway is cell wall biogenesis; lipoteichoic acid biosynthesis. Its function is as follows. Carrier protein involved in the D-alanylation of lipoteichoic acid (LTA). The loading of thioester-linked D-alanine onto DltC is catalyzed by D-alanine--D-alanyl carrier protein ligase DltA. The DltC-carried D-alanyl group is further transferred to cell membrane phosphatidylglycerol (PG) by forming an ester bond, probably catalyzed by DltD. D-alanylation of LTA plays an important role in modulating the properties of the cell wall in Gram-positive bacteria, influencing the net charge of the cell wall. This is D-alanyl carrier protein from Bacillus subtilis (strain 168).